We begin with the raw amino-acid sequence, 534 residues long: Thromboxane-A synthase (534 aa).

The Cytoplasmic segment spans residues 1-10 (MEVLGFLSPE). Residues 11–31 (LNGPMVTMALAVVLLALLKWY) traverse the membrane as a helical segment. At 32–75 (STSAFSRLEKLGIRHPKPSPFIGNLTFFRQGFWESHMELRKQYG) the chain is on the lumenal side. The chain crosses the membrane as a helical span at residues 76–96 (PLSGYYLGRRMIVVISDPDMI). Over 97-223 (KQVLAEKFSN…RRFFAFSVPR (127 aa)) the chain is Cytoplasmic. A helical transmembrane segment spans residues 224-244 (LILVLILSFPSIMVPLARILP). Topologically, residues 245–336 (NKKRDEVNGF…LTVDEVVGQA (92 aa)) are lumenal. A helical transmembrane segment spans residues 337–357 (FLFLIAGYEIITNTLSFVTYL). The Cytoplasmic portion of the chain corresponds to 358–534 (LATNPDCQEK…NGVYIRIVPR (177 aa)). Cysteine 480 provides a ligand contact to heme.

The protein belongs to the cytochrome P450 family. In terms of assembly, monomer. The cofactor is heme. As to expression, expressed in lung, kidney and thymus.

It is found in the endoplasmic reticulum membrane. It carries out the reaction prostaglandin H2 = thromboxane A2. It catalyses the reaction prostaglandin H2 = (12S)-hydroxy-(5Z,8E,10E)-heptadecatrienoate + malonaldehyde. The catalysed reaction is a hydroperoxyeicosatetraenoate = an oxoeicosatetraenoate + H2O. The enzyme catalyses (15S)-hydroperoxy-(5Z,8Z,11Z,13E)-eicosatetraenoate = 15-oxo-(5Z,8Z,11Z,13E)-eicosatetraenoate + H2O. It carries out the reaction (15S)-hydroperoxy-(5Z,8Z,11Z,13E)-eicosatetraenoate + AH2 = (15S)-hydroxy-(5Z,8Z,11Z,13E)-eicosatetraenoate + A + H2O. In terms of biological role, catalyzes the conversion of prostaglandin H2 (PGH2) to thromboxane A2 (TXA2), a potent inducer of blood vessel constriction and platelet aggregation. Also cleaves PGH2 to 12-hydroxy-heptadecatrienoicacid (12-HHT) and malondialdehyde, which is known to act as a mediator of DNA damage. 12-HHT and malondialdehyde are formed stoichiometrically in the same amounts as TXA2. Additionally, displays dehydratase activity, toward (15S)-hydroperoxy-(5Z,8Z,11Z,13E)-eicosatetraenoate (15(S)-HPETE) producing 15-KETE and 15-HETE. In Sus scrofa (Pig), this protein is Thromboxane-A synthase (TBXAS1).